The following is a 122-amino-acid chain: Large ribosomal subunit protein uL14c (122 aa).

This sequence belongs to the universal ribosomal protein uL14 family. As to quaternary structure, part of the 50S ribosomal subunit.

It localises to the plastid. The protein localises to the chloroplast. Functionally, binds to 23S rRNA. This chain is Large ribosomal subunit protein uL14c, found in Nandina domestica (Heavenly bamboo).